The chain runs to 272 residues: Rhamnulose-1-phosphate aldolase (272 aa).

E117 is an active-site residue. The Zn(2+) site is built by H141, H143, and H212.

Belongs to the aldolase class II family. RhaD subfamily. Requires Zn(2+) as cofactor.

Its subcellular location is the cytoplasm. The catalysed reaction is L-rhamnulose 1-phosphate = (S)-lactaldehyde + dihydroxyacetone phosphate. It participates in carbohydrate degradation; L-rhamnose degradation; glycerone phosphate from L-rhamnose: step 3/3. Functionally, catalyzes the reversible cleavage of L-rhamnulose-1-phosphate to dihydroxyacetone phosphate (DHAP) and L-lactaldehyde. The protein is Rhamnulose-1-phosphate aldolase of Mannheimia succiniciproducens (strain KCTC 0769BP / MBEL55E).